The sequence spans 257 residues: Hydroxyacylglutathione hydrolase (257 aa).

Zn(2+)-binding residues include His-54, His-56, Asp-58, His-59, His-113, Asp-137, and His-175.

Belongs to the metallo-beta-lactamase superfamily. Glyoxalase II family. In terms of assembly, monomer. Zn(2+) is required as a cofactor.

The enzyme catalyses an S-(2-hydroxyacyl)glutathione + H2O = a 2-hydroxy carboxylate + glutathione + H(+). Its pathway is secondary metabolite metabolism; methylglyoxal degradation; (R)-lactate from methylglyoxal: step 2/2. Its function is as follows. Thiolesterase that catalyzes the hydrolysis of S-D-lactoyl-glutathione to form glutathione and D-lactic acid. The protein is Hydroxyacylglutathione hydrolase of Trichodesmium erythraeum (strain IMS101).